A 125-amino-acid polypeptide reads, in one-letter code: UPF0102 protein PBPRA3228 (125 aa).

The protein belongs to the UPF0102 family.

The polypeptide is UPF0102 protein PBPRA3228 (Photobacterium profundum (strain SS9)).